We begin with the raw amino-acid sequence, 77 residues long: Acyl carrier protein (77 aa).

The Carrier domain occupies M1 to K76. An O-(pantetheine 4'-phosphoryl)serine modification is found at S36.

It belongs to the acyl carrier protein (ACP) family. In terms of processing, 4'-phosphopantetheine is transferred from CoA to a specific serine of apo-ACP by AcpS. This modification is essential for activity because fatty acids are bound in thioester linkage to the sulfhydryl of the prosthetic group.

The protein resides in the cytoplasm. The protein operates within lipid metabolism; fatty acid biosynthesis. Its function is as follows. Carrier of the growing fatty acid chain in fatty acid biosynthesis. This Campylobacter jejuni subsp. doylei (strain ATCC BAA-1458 / RM4099 / 269.97) protein is Acyl carrier protein.